A 73-amino-acid polypeptide reads, in one-letter code: Translation initiation factor IF-1 (73 aa).

An S1-like domain is found at 1–72; sequence MAKDDVIEVE…TKGRITYRFI (72 aa).

The protein belongs to the IF-1 family. In terms of assembly, component of the 30S ribosomal translation pre-initiation complex which assembles on the 30S ribosome in the order IF-2 and IF-3, IF-1 and N-formylmethionyl-tRNA(fMet); mRNA recruitment can occur at any time during PIC assembly.

The protein localises to the cytoplasm. Functionally, one of the essential components for the initiation of protein synthesis. Stabilizes the binding of IF-2 and IF-3 on the 30S subunit to which N-formylmethionyl-tRNA(fMet) subsequently binds. Helps modulate mRNA selection, yielding the 30S pre-initiation complex (PIC). Upon addition of the 50S ribosomal subunit IF-1, IF-2 and IF-3 are released leaving the mature 70S translation initiation complex. This chain is Translation initiation factor IF-1, found in Lactobacillus acidophilus (strain ATCC 700396 / NCK56 / N2 / NCFM).